Here is a 138-residue protein sequence, read N- to C-terminus: Small ribosomal subunit protein uS11c (138 aa).

The disordered stretch occupies residues 1 to 22; that stretch reads MAKPIPKIGSRKNARSGSRKHL. Positions 9 to 22 are enriched in basic residues; the sequence is GSRKNARSGSRKHL.

This sequence belongs to the universal ribosomal protein uS11 family. As to quaternary structure, part of the 30S ribosomal subunit.

Its subcellular location is the plastid. The protein resides in the chloroplast. The polypeptide is Small ribosomal subunit protein uS11c (Lotus japonicus (Lotus corniculatus var. japonicus)).